We begin with the raw amino-acid sequence, 140 residues long: Peptide methionine sulfoxide reductase MsrB (140 aa).

The region spanning 9-131 (DALWREKLTP…NSASIVLDSE (123 aa)) is the MsrB domain. Residues cysteine 48, cysteine 51, cysteine 97, and cysteine 100 each coordinate Zn(2+). Catalysis depends on cysteine 120, which acts as the Nucleophile.

It belongs to the MsrB Met sulfoxide reductase family. Zn(2+) is required as a cofactor.

The enzyme catalyses L-methionyl-[protein] + [thioredoxin]-disulfide + H2O = L-methionyl-(R)-S-oxide-[protein] + [thioredoxin]-dithiol. This is Peptide methionine sulfoxide reductase MsrB from Cellvibrio japonicus (strain Ueda107) (Pseudomonas fluorescens subsp. cellulosa).